We begin with the raw amino-acid sequence, 180 residues long: MKYIEIDDELYRYIASNTQQIGESASDILRRLLGLEVTAEAESIPERISEPSMEGVEEAAPVRSAVAEAGVFEELVDDEQLPRQKGAVGRFLYLLDCLYRQHPSAFDGVLAIRGRDRLYFSQSKEALLKASPSANPKQIGASPFWVSANNNTAKKRAILEEVLEILGCQKALAARIAEQV.

The interaction with DNA stretch occupies residues 87 to 88 (AV).

The protein belongs to the SeqA family. In terms of assembly, homodimer. Polymerizes to form helical filaments.

The protein resides in the cytoplasm. In terms of biological role, negative regulator of replication initiation, which contributes to regulation of DNA replication and ensures that replication initiation occurs exactly once per chromosome per cell cycle. Binds to pairs of hemimethylated GATC sequences in the oriC region, thus preventing assembly of replication proteins and re-initiation at newly replicated origins. Repression is relieved when the region becomes fully methylated. This is Negative modulator of initiation of replication from Ferrimonas balearica (strain DSM 9799 / CCM 4581 / KCTC 23876 / PAT).